The following is a 418-amino-acid chain: MLERSMNISDFDPELFDAIAKETARQEDHIELIASENYCSPRVLEAQGSQLTNKYAEGYPGKRYYGGCEHVDVVEQLAIDRANELFGSDYANVQPHAGSQANAAVFLALLNAGDTVLGMSLAHGGHLTHGSHVNFSGKLYNAIQYGLDETTGEIDYAQVEALALEHKPKMIIGGFSAYSGIVDWAKLREIADKIGAYFFVDMAHVAGLIAAGIYPSPVPHAHVVTTTTHKTLAGPRGGLIISACGDEAIYKKLNSAVFPGGQGGPLCHVIAAKAVAFKEALQPEFKVYQTQVVKNAQAMVAVMQERGYKIVSDKTENHLFLLDLINKDITGKDADAALGNAHITVNKNSVPNDPRSPFVTSGLRIGSPAITRRGFKEAESKELAGWICDVLDNINDESVQAQVREKVKAICAKLPVYA.

(6S)-5,6,7,8-tetrahydrofolate is bound by residues leucine 121 and 125–127 (GHL). Lysine 230 carries the N6-(pyridoxal phosphate)lysine modification. Residue 356 to 358 (SPF) coordinates (6S)-5,6,7,8-tetrahydrofolate.

It belongs to the SHMT family. Homodimer. Requires pyridoxal 5'-phosphate as cofactor.

It localises to the cytoplasm. It catalyses the reaction (6R)-5,10-methylene-5,6,7,8-tetrahydrofolate + glycine + H2O = (6S)-5,6,7,8-tetrahydrofolate + L-serine. Its pathway is one-carbon metabolism; tetrahydrofolate interconversion. It functions in the pathway amino-acid biosynthesis; glycine biosynthesis; glycine from L-serine: step 1/1. Its function is as follows. Catalyzes the reversible interconversion of serine and glycine with tetrahydrofolate (THF) serving as the one-carbon carrier. This reaction serves as the major source of one-carbon groups required for the biosynthesis of purines, thymidylate, methionine, and other important biomolecules. Also exhibits THF-independent aldolase activity toward beta-hydroxyamino acids, producing glycine and aldehydes, via a retro-aldol mechanism. This Pseudoalteromonas translucida (strain TAC 125) protein is Serine hydroxymethyltransferase.